Here is a 99-residue protein sequence, read N- to C-terminus: Turripeptide OL71 (99 aa).

Contains 5 disulfide bonds. In terms of tissue distribution, expressed by the venom duct.

It is found in the secreted. Functionally, acts as a neurotoxin by inhibiting an ion channel. The polypeptide is Turripeptide OL71 (Iotyrris olangoensis (Sea snail)).